A 704-amino-acid polypeptide reads, in one-letter code: Metabotropic glutamate receptor-like protein K (704 aa).

The N-terminal stretch at 1 to 21 is a signal peptide; it reads MIKLILSIILIICFIINSIES. The Extracellular portion of the chain corresponds to 22–383; sequence FKMITLTTGP…SKVEFQRSIQ (362 aa). 8 N-linked (GlcNAc...) asparagine glycosylation sites follow: Asn66, Asn104, Asn256, Asn286, Asn308, Asn337, Asn343, and Asn368. Residues 384–404 traverse the membrane as a helical segment; it reads IGFSIVSGLLIGFVILMMIGI. Over 405-419 the chain is Cytoplasmic; it reads VKYQDTPSIRSASPS. A helical membrane pass occupies residues 420–440; it reads FLNLTLLGGVIIFIGIIVWVA. The Extracellular portion of the chain corresponds to 441–455; it reads PISTHQCNARFWLVT. The chain crosses the membrane as a helical span at residues 456–476; that stretch reads IGFSTLIGSLVVKNIRIWLIF. At 477–492 the chain is on the cytoplasmic side; that stretch reads DNPELKIRTITNNQLY. The helical transmembrane segment at 493–513 threads the bilayer; it reads PWVGLCLVINIVLMSIITTVG. At 514-541 the chain is on the extracellular side; sequence DLKAIEAQGIDSLGKFEYMTICKMNYTG. N-linked (GlcNAc...) asparagine glycosylation occurs at Asn538. A helical membrane pass occupies residues 542–562; that stretch reads AATLYSILAYFGTLLLVGVFV. Residues 563 to 578 lie on the Cytoplasmic side of the membrane; the sequence is SWKIRIVHIEEFSECT. A helical transmembrane segment spans residues 579–599; sequence AIAKTLYSISFCLFVIVPLMI. Topologically, residues 600-608 are extracellular; the sequence is SPQDKQSET. Residues 609–629 form a helical membrane-spanning segment; sequence IILCVTGIFITTGALLIFFLP. The Cytoplasmic segment spans residues 630–704; it reads KFWRIFGNEK…NESSLSNETK (75 aa). Disordered stretches follow at residues 657 to 677 and 685 to 704; these read ARAE…SKSS and SGIE…NETK.

It in the N-terminal section; belongs to the BMP lipoprotein family. The protein in the C-terminal section; belongs to the G-protein coupled receptor 3 family. GABA-B receptor subfamily.

It is found in the membrane. The polypeptide is Metabotropic glutamate receptor-like protein K (grlK) (Dictyostelium discoideum (Social amoeba)).